The sequence spans 116 residues: Large ribosomal subunit protein uL22c (116 aa).

The protein belongs to the universal ribosomal protein uL22 family. As to quaternary structure, part of the 50S ribosomal subunit.

It is found in the plastid. The protein localises to the chloroplast. Its function is as follows. This protein binds specifically to 23S rRNA. Functionally, the globular domain of the protein is located near the polypeptide exit tunnel on the outside of the subunit, while an extended beta-hairpin is found that lines the wall of the exit tunnel in the center of the 70S ribosome. This is Large ribosomal subunit protein uL22c (rpl22) from Psilotum nudum (Whisk fern).